The sequence spans 122 residues: Ubiquitin-related modifier 1 (122 aa).

Positions 33–48 (PSTVPADNNTSVTTKD) are enriched in polar residues. The segment at 33 to 52 (PSTVPADNNTSVTTKDAASP) is disordered. 1-thioglycine is present on G122. A Glycyl lysine isopeptide (Gly-Lys) (interchain with K-? in acceptor proteins) cross-link involves residue G122.

Belongs to the URM1 family. In terms of processing, C-terminal thiocarboxylation occurs in 2 steps, it is first acyl-adenylated (-COAMP) via the hesA/moeB/thiF part of UBA4, then thiocarboxylated (-COSH) via the rhodanese domain of UBA4.

The protein resides in the cytoplasm. It participates in tRNA modification; 5-methoxycarbonylmethyl-2-thiouridine-tRNA biosynthesis. Acts as a sulfur carrier required for 2-thiolation of mcm(5)S(2)U at tRNA wobble positions of cytosolic tRNA(Lys), tRNA(Glu) and tRNA(Gln). Serves as sulfur donor in tRNA 2-thiolation reaction by being thiocarboxylated (-COSH) at its C-terminus by the MOCS3 homolog UBA4. The sulfur is then transferred to tRNA to form 2-thiolation of mcm(5)S(2)U. Prior mcm(5) tRNA modification by the elongator complex is required for 2-thiolation. Also acts as a ubiquitin-like protein (UBL) that is covalently conjugated via an isopeptide bond to lysine residues of target proteins such as AHP1. The thiocarboxylated form serves as substrate for conjugation and oxidative stress specifically induces the formation of UBL-protein conjugates. The polypeptide is Ubiquitin-related modifier 1 (Laccaria bicolor (strain S238N-H82 / ATCC MYA-4686) (Bicoloured deceiver)).